Consider the following 177-residue polypeptide: Large ribosomal subunit protein uL5 (177 aa).

It belongs to the universal ribosomal protein uL5 family. Part of the 50S ribosomal subunit; contacts the 5S rRNA and probably tRNA. Forms a bridge to the 30S subunit in the 70S ribosome.

In terms of biological role, this is one of the proteins that bind and probably mediate the attachment of the 5S RNA into the large ribosomal subunit, where it forms part of the central protuberance. In the 70S ribosome it contacts protein S13 of the 30S subunit (bridge B1b), connecting the 2 subunits; this bridge is implicated in subunit movement. May contact the P site tRNA; the 5S rRNA and some of its associated proteins might help stabilize positioning of ribosome-bound tRNAs. This is Large ribosomal subunit protein uL5 from Sulfurisphaera tokodaii (strain DSM 16993 / JCM 10545 / NBRC 100140 / 7) (Sulfolobus tokodaii).